Consider the following 512-residue polypeptide: GTPase Obg (512 aa).

The Obg domain occupies 2–159 (ATFVDTVTLH…GDVVLELKVV (158 aa)). Positions 160 to 336 (ADVALVGYPS…LSFALAELVE (177 aa)) constitute an OBG-type G domain. Residues 166-173 (GYPSAGKS), 191-195 (FTTLH), 212-215 (DVPG), 288-291 (NKID), and 317-319 (STV) contribute to the GTP site. Ser173 and Thr193 together coordinate Mg(2+). The OCT domain maps to 355 to 439 (PRAVNEKPFT…GDGIVFDWEP (85 aa)). Positions 491–512 (GEAGLWADEDGTDEDASSDAKA) are disordered. Residues 497-512 (ADEDGTDEDASSDAKA) show a composition bias toward acidic residues.

Belongs to the TRAFAC class OBG-HflX-like GTPase superfamily. OBG GTPase family. In terms of assembly, monomer. Mg(2+) is required as a cofactor.

It localises to the cytoplasm. Its function is as follows. An essential GTPase which binds GTP, GDP and possibly (p)ppGpp with moderate affinity, with high nucleotide exchange rates and a fairly low GTP hydrolysis rate. Plays a role in control of the cell cycle, stress response, ribosome biogenesis and in those bacteria that undergo differentiation, in morphogenesis control. This Clavibacter michiganensis subsp. michiganensis (strain NCPPB 382) protein is GTPase Obg.